The sequence spans 403 residues: Dual-specificity RNA methyltransferase RlmN (403 aa).

A disordered region spans residues 1 to 25 (MTKIPMQPADSTPATFHPNAPTKTN). Glu-112 functions as the Proton acceptor in the catalytic mechanism. The region spanning 123–364 (VNGRKTLCIS…VCTIRQTRGD (242 aa)) is the Radical SAM core domain. Cys-130 and Cys-370 are joined by a disulfide. [4Fe-4S] cluster contacts are provided by Cys-137, Cys-141, and Cys-144. Residues 193-194 (GE), Ser-225, 247-249 (SLH), and Asn-327 each bind S-adenosyl-L-methionine. Cys-370 serves as the catalytic S-methylcysteine intermediate.

Belongs to the radical SAM superfamily. RlmN family. [4Fe-4S] cluster serves as cofactor.

The protein localises to the cytoplasm. The catalysed reaction is adenosine(2503) in 23S rRNA + 2 reduced [2Fe-2S]-[ferredoxin] + 2 S-adenosyl-L-methionine = 2-methyladenosine(2503) in 23S rRNA + 5'-deoxyadenosine + L-methionine + 2 oxidized [2Fe-2S]-[ferredoxin] + S-adenosyl-L-homocysteine. It catalyses the reaction adenosine(37) in tRNA + 2 reduced [2Fe-2S]-[ferredoxin] + 2 S-adenosyl-L-methionine = 2-methyladenosine(37) in tRNA + 5'-deoxyadenosine + L-methionine + 2 oxidized [2Fe-2S]-[ferredoxin] + S-adenosyl-L-homocysteine. In terms of biological role, specifically methylates position 2 of adenine 2503 in 23S rRNA and position 2 of adenine 37 in tRNAs. m2A2503 modification seems to play a crucial role in the proofreading step occurring at the peptidyl transferase center and thus would serve to optimize ribosomal fidelity. The chain is Dual-specificity RNA methyltransferase RlmN from Psychrobacter sp. (strain PRwf-1).